The sequence spans 79 residues: UPF0180 protein BCAH187_A1552 (79 aa).

The protein belongs to the UPF0180 family.

The protein is UPF0180 protein BCAH187_A1552 of Bacillus cereus (strain AH187).